A 419-amino-acid polypeptide reads, in one-letter code: MRKIIINGGKALSGEVAVSGAKNSVVALIPAIILADDIVILDGVPAISDVDSLIEIMELMGATVNYHGDTLEIDPRGVQDIPMPYGKINSLRASYYFYGSLLGRFGQAVVGLPGGCDLGPRPIDLHLKAFEAMGVEVSYEGENMNLSTNGQKIHGAHIYMDTVSVGATINTMVAATKAQGKTVIENAAREPEIIDVATLLNNMGAHIRGAGTDIITIQGVQKLHGTRHQVIPDRIEAGTYIALAAAIGKGIKITNVLYEHLESFIAKLEEMGVRMTVEEDAIFVEKQESLKAITIKTSPYPGFATDLQQPLTPLLLKADGRGTIIDTIYEKRINHVPELMRMGADISVIGGQIVYQGPSRLTGAQVKATDLRAGAALVTAGLMAEGKTEITNIEFILRGYASIIAKLTALGADIQLIED.

22-23 serves as a coordination point for phosphoenolpyruvate; it reads KN. Arginine 92 lines the UDP-N-acetyl-alpha-D-glucosamine pocket. Residue cysteine 116 is the Proton donor of the active site. Cysteine 116 carries the 2-(S-cysteinyl)pyruvic acid O-phosphothioketal modification. UDP-N-acetyl-alpha-D-glucosamine contacts are provided by residues 121 to 125, aspartate 306, and isoleucine 328; that span reads RPIDL.

Belongs to the EPSP synthase family. MurA subfamily.

The protein localises to the cytoplasm. The enzyme catalyses phosphoenolpyruvate + UDP-N-acetyl-alpha-D-glucosamine = UDP-N-acetyl-3-O-(1-carboxyvinyl)-alpha-D-glucosamine + phosphate. Its pathway is cell wall biogenesis; peptidoglycan biosynthesis. Cell wall formation. Adds enolpyruvyl to UDP-N-acetylglucosamine. The polypeptide is UDP-N-acetylglucosamine 1-carboxyvinyltransferase 2 (Streptococcus pyogenes serotype M18 (strain MGAS8232)).